A 104-amino-acid polypeptide reads, in one-letter code: uncharacterized protein (104 aa).

The helical transmembrane segment at 72–92 threads the bilayer; the sequence is LIFSHNIVIIVSPIYMISFII.

It localises to the membrane. This is an uncharacterized protein from Saccharomyces cerevisiae (strain ATCC 204508 / S288c) (Baker's yeast).